The primary structure comprises 395 residues: tRNA-specific 2-thiouridylase MnmA (395 aa).

Residues 6 to 13 (AMSGGVDS) and leucine 32 contribute to the ATP site. Residue cysteine 101 is the Nucleophile of the active site. Cysteine 101 and cysteine 193 are disulfide-bonded. Glycine 125 lines the ATP pocket. Residues 143 to 145 (KDQ) are interaction with tRNA. Cysteine 193 functions as the Cysteine persulfide intermediate in the catalytic mechanism.

This sequence belongs to the MnmA/TRMU family.

It localises to the cytoplasm. It carries out the reaction S-sulfanyl-L-cysteinyl-[protein] + uridine(34) in tRNA + AH2 + ATP = 2-thiouridine(34) in tRNA + L-cysteinyl-[protein] + A + AMP + diphosphate + H(+). In terms of biological role, catalyzes the 2-thiolation of uridine at the wobble position (U34) of tRNA, leading to the formation of s(2)U34. In Corynebacterium jeikeium (strain K411), this protein is tRNA-specific 2-thiouridylase MnmA.